A 109-amino-acid chain; its full sequence is Urease subunit gamma (109 aa).

Belongs to the urease gamma subunit family. In terms of assembly, heterotrimer of UreA (gamma), UreB (beta) and UreC (alpha) subunits. Three heterotrimers associate to form the active enzyme.

The protein resides in the cytoplasm. It carries out the reaction urea + 2 H2O + H(+) = hydrogencarbonate + 2 NH4(+). It participates in nitrogen metabolism; urea degradation; CO(2) and NH(3) from urea (urease route): step 1/1. The sequence is that of Urease subunit gamma from Natronomonas pharaonis (strain ATCC 35678 / DSM 2160 / CIP 103997 / JCM 8858 / NBRC 14720 / NCIMB 2260 / Gabara) (Halobacterium pharaonis).